The following is a 445-amino-acid chain: Succinate--CoA ligase [ADP-forming] subunit beta, mitochondrial (445 aa).

The N-terminal 17 residues, 1–17 (MLSNIVKKTIQSSKNLK), are a transit peptide targeting the mitochondrion. Residues 43–270 (QKMMKSYGIN…DNAAFRHPDI (228 aa)) form the ATP-grasp domain. ATP contacts are provided by residues Lys80 and 87 to 89 (GRG). Residues Asn240 and Asp254 each contribute to the Mg(2+) site. Residues Asn305 and 362-364 (GIM) each bind substrate.

It belongs to the succinate/malate CoA ligase beta subunit family. ATP-specific subunit beta subfamily. As to quaternary structure, heterodimer of an alpha and a beta subunit. The beta subunit determines specificity for ATP. The cofactor is Mg(2+).

Its subcellular location is the mitochondrion. It catalyses the reaction succinate + ATP + CoA = succinyl-CoA + ADP + phosphate. The protein operates within carbohydrate metabolism; tricarboxylic acid cycle; succinate from succinyl-CoA (ligase route): step 1/1. ATP-specific succinyl-CoA synthetase functions in the citric acid cycle (TCA), coupling the hydrolysis of succinyl-CoA to the synthesis of ATP and thus represents the only step of substrate-level phosphorylation in the TCA. The beta subunit provides nucleotide specificity of the enzyme and binds the substrate succinate, while the binding sites for coenzyme A and phosphate are found in the alpha subunit. This chain is Succinate--CoA ligase [ADP-forming] subunit beta, mitochondrial (scsC), found in Dictyostelium discoideum (Social amoeba).